The primary structure comprises 98 residues: NADH-ubiquinone oxidoreductase chain 4L (98 aa).

The next 3 membrane-spanning stretches (helical) occupy residues 1–21 (MSPI…GMLV), 26–46 (LMAS…TIAL), and 61–81 (ITLL…LVSI).

It belongs to the complex I subunit 4L family. Core subunit of respiratory chain NADH dehydrogenase (Complex I) which is composed of 45 different subunits.

The protein localises to the mitochondrion inner membrane. The enzyme catalyses a ubiquinone + NADH + 5 H(+)(in) = a ubiquinol + NAD(+) + 4 H(+)(out). Functionally, core subunit of the mitochondrial membrane respiratory chain NADH dehydrogenase (Complex I) which catalyzes electron transfer from NADH through the respiratory chain, using ubiquinone as an electron acceptor. Part of the enzyme membrane arm which is embedded in the lipid bilayer and involved in proton translocation. The protein is NADH-ubiquinone oxidoreductase chain 4L (MT-ND4L) of Chlorocebus aethiops (Green monkey).